The primary structure comprises 449 residues: Streptomycin-6-phosphate phosphatase (449 aa).

A signal peptide spans 1 to 32; that stretch reads MRFAYGRLPWRRGAVLGSALLVLVTAPAASTA. Asp50 is a Mg(2+) binding site. Asp50 contributes to the Zn(2+) binding site. Ser99 (phosphoserine intermediate) is an active-site residue. Residues Asp151 and Thr153 each coordinate Mg(2+). Residues 268 to 290 are disordered; sequence APGGTAPQRCATRNPGRPAGTPD. Residue Glu321 coordinates Mg(2+). Zn(2+)-binding residues include Asp326, His330, Asp368, His369, and His412.

This sequence belongs to the alkaline phosphatase family. Requires Mg(2+) as cofactor. Zn(2+) serves as cofactor.

The protein resides in the secreted. It catalyses the reaction streptomycin 6-phosphate + H2O = streptomycin + phosphate. Its pathway is antibiotic biosynthesis; streptomycin biosynthesis. Its function is as follows. Specifically cleaves both streptomycin-6-phosphate and, more slowly, streptomycin-3''-phosphate during the biosynthesis of streptomycin. This Streptomyces griseus protein is Streptomycin-6-phosphate phosphatase (strK).